A 154-amino-acid polypeptide reads, in one-letter code: Large ribosomal subunit protein uL13 (154 aa).

It belongs to the universal ribosomal protein uL13 family. Part of the 50S ribosomal subunit.

Its function is as follows. This protein is one of the early assembly proteins of the 50S ribosomal subunit, although it is not seen to bind rRNA by itself. It is important during the early stages of 50S assembly. The sequence is that of Large ribosomal subunit protein uL13 from Rhodospirillum centenum (strain ATCC 51521 / SW).